The chain runs to 368 residues: Tubby-like F-box protein 2 (368 aa).

The span at 1 to 17 (MVPWRRSSSSSSAPSSR) shows a compositional bias: low complexity. Residues 1 to 44 (MVPWRRSSSSSSAPSSRPARRPARTNARVSPDVSSELSPLAGEE) are disordered. In terms of domain architecture, F-box spans 49–104 (ERWSALVPDLLADILRCVEAGSERWPPRRDVVACASVCRRWRDVAVAVVQPPLESG).

Belongs to the TUB family. In terms of tissue distribution, expressed in stems, leaves, flowers and seeds.

The polypeptide is Tubby-like F-box protein 2 (TULP2) (Oryza sativa subsp. japonica (Rice)).